Reading from the N-terminus, the 731-residue chain is DNA ligase (731 aa).

Residues 47-51, 96-97, and Glu-133 each bind NAD(+); these read DAEYD and SI. Lys-135 (N6-AMP-lysine intermediate) is an active-site residue. NAD(+) contacts are provided by Arg-156, Glu-192, Lys-313, and Lys-337. Residues Cys-462, Cys-465, Cys-480, and Cys-486 each coordinate Zn(2+). Residues 645-731 enclose the BRCT domain; it reads AATLPLAGMT…RGTPPNAGGA (87 aa).

The protein belongs to the NAD-dependent DNA ligase family. LigA subfamily. It depends on Mg(2+) as a cofactor. Requires Mn(2+) as cofactor.

It catalyses the reaction NAD(+) + (deoxyribonucleotide)n-3'-hydroxyl + 5'-phospho-(deoxyribonucleotide)m = (deoxyribonucleotide)n+m + AMP + beta-nicotinamide D-nucleotide.. Functionally, DNA ligase that catalyzes the formation of phosphodiester linkages between 5'-phosphoryl and 3'-hydroxyl groups in double-stranded DNA using NAD as a coenzyme and as the energy source for the reaction. It is essential for DNA replication and repair of damaged DNA. This chain is DNA ligase, found in Acidovorax sp. (strain JS42).